A 233-amino-acid polypeptide reads, in one-letter code: Probable GTP-binding protein EngB (233 aa).

The region spanning 31 to 205 (TGVEIAFAGR…RRKLDTWFGP (175 aa)) is the EngB-type G domain. GTP is bound by residues 39 to 46 (GRSNAGKS), 66 to 70 (GRTQL), 84 to 87 (DLPG), 151 to 154 (TKAD), and 184 to 186 (FSS). Ser46 and Thr68 together coordinate Mg(2+).

This sequence belongs to the TRAFAC class TrmE-Era-EngA-EngB-Septin-like GTPase superfamily. EngB GTPase family. It depends on Mg(2+) as a cofactor.

Necessary for normal cell division and for the maintenance of normal septation. This Photobacterium profundum (strain SS9) protein is Probable GTP-binding protein EngB.